Consider the following 338-residue polypeptide: Arginine N-succinyltransferase subunit alpha (338 aa).

This sequence belongs to the succinylarginine dihydrolase family. In terms of assembly, heterotetramer of two alpha and two beta subunits.

It carries out the reaction succinyl-CoA + L-arginine = N(2)-succinyl-L-arginine + CoA + H(+). The protein operates within amino-acid degradation; L-arginine degradation via AST pathway; L-glutamate and succinate from L-arginine: step 1/5. Functionally, catalyzes the transfer of succinyl-CoA to arginine to produce N(2)-succinylarginine. Also acts on L-ornithine. In Pseudomonas aeruginosa (strain ATCC 15692 / DSM 22644 / CIP 104116 / JCM 14847 / LMG 12228 / 1C / PRS 101 / PAO1), this protein is Arginine N-succinyltransferase subunit alpha (astA).